A 505-amino-acid chain; its full sequence is RNA-splicing ligase RtcB homolog (505 aa).

Residues D119, C122, H227, and H259 each contribute to the Mn(2+) site. GMP is bound at residue 226–230 (NHYAE). S300 carries the post-translational modification Phosphoserine. Mn(2+) is bound at residue H353. Residues 353 to 354 (HN), 402 to 405 (GGTM), S409, and 428 to 431 (HGAG) each bind GMP. H428 (GMP-histidine intermediate) is an active-site residue. A Glycyl lysine isopeptide (Lys-Gly) (interchain with G-Cter in SUMO2) cross-link involves residue K496. Residue K504 participates in GMP binding.

This sequence belongs to the RtcB family. In terms of assembly, catalytic component of the tRNA-splicing ligase complex. It depends on Mn(2+) as a cofactor.

Its subcellular location is the nucleus. It localises to the cytoplasm. It carries out the reaction a 3'-end 3'-phospho-ribonucleotide-RNA + a 5'-end dephospho-ribonucleoside-RNA + GTP = a ribonucleotidyl-ribonucleotide-RNA + GMP + diphosphate. The catalysed reaction is a 3'-end 2',3'-cyclophospho-ribonucleotide-RNA + a 5'-end dephospho-ribonucleoside-RNA + GTP + H2O = a ribonucleotidyl-ribonucleotide-RNA + GMP + diphosphate + H(+). Catalytic subunit of the tRNA-splicing ligase complex that acts by directly joining spliced tRNA halves to mature-sized tRNAs by incorporating the precursor-derived splice junction phosphate into the mature tRNA as a canonical 3',5'-phosphodiester. May act as an RNA ligase with broad substrate specificity, and may function toward other RNAs. This chain is RNA-splicing ligase RtcB homolog, found in Rattus norvegicus (Rat).